A 1041-amino-acid polypeptide reads, in one-letter code: Putative transcription elongation factor SPT5 homolog 1 (1041 aa).

The disordered stretch occupies residues 1-133; that stretch reads MPRSRDEDDE…ERGDRRYERR (133 aa). Composition is skewed to acidic residues over residues 7 to 32, 53 to 69, and 99 to 114; these read EDDE…EEEE, DYAE…DEDY, and DDED…DDFI. Position 59 is a phosphoserine (serine 59). Positions 122-133 are enriched in basic and acidic residues; that stretch reads PDERGDRRYERR. KOW domains lie at 273 to 300, 425 to 452, 477 to 504, and 601 to 628; these read DLSR…VDNV, HFMK…VDEE, YFEP…VDQH, and VIAV…IYKG. Disordered regions lie at residues 662 to 713 and 768 to 921; these read NRNG…GDDS and DTSR…GTGL. Over residues 691–703 the composition is skewed to gly residues; that stretch reads GRGGGYNNSGGRH. The region spanning 712 to 739 is the KOW 5 domain; sequence DSLLGTTVKIRLGPFKGYRGPVVEVKGN. Residues 804–814 show a composition bias toward basic and acidic residues; sequence DGMRTPMRDRA. 2 stretches are compositionally biased toward polar residues: residues 835-844 and 893-904; these read SWGTSPQYQP and TPGQPMTPSSAS. Residues 988-1015 enclose the KOW 6 domain; sequence PPRKSDRVKIVGGQYRGSTGKLIGIDGS.

Belongs to the SPT5 family.

It localises to the nucleus. Its function is as follows. May regulate transcription elongation by RNA polymerase II. May enhance transcriptional pausing at sites proximal to the promoter, which may in turn facilitate the assembly of an elongation competent RNA polymerase II complex. This is Putative transcription elongation factor SPT5 homolog 1 from Arabidopsis thaliana (Mouse-ear cress).